A 357-amino-acid chain; its full sequence is Hydroxyproline O-arabinosyltransferase RDN1 (357 aa).

A helical; Signal-anchor transmembrane segment spans residues leucine 13–methionine 33.

In terms of tissue distribution, expressed in the vasculature of leaves, petioles, stems and roots. Expressed in the vascular cylinder throughout the root, and nodule vasculature.

The protein resides in the golgi apparatus membrane. It carries out the reaction trans-4-hydroxy-L-prolyl-[protein] + UDP-beta-L-arabinofuranose = O-(beta-L-arabinofuranosyl)-trans-4-hydroxy-L-prolyl-[protein] + UDP + H(+). Functionally, probable glycosyltransferase involved in the O-arabinosylation of several proteins including extensins and small signaling peptides. Catalyzes the transfer of the initial L-arabinose to the hydroxyl group of Hyp residues. Probably involved in the arabinosylation of CLE12, a signaling peptide that moves from root to shoot, to interact with SUNN receptor kinase signaling that regulates nodulation. Involved in long distance nodulation signaling events. Involved in the autoregulation of nodulation (AON), a long distance systemic signaling from root to shoot and back again, which allows legumes to limit the number of root nodules formed based on available nitrogen and previous rhizobial colonization. Functions in the root, upstream of the shoot receptor kinase SUNN and via CLE peptide, to control AON. The sequence is that of Hydroxyproline O-arabinosyltransferase RDN1 from Medicago truncatula (Barrel medic).